The following is a 100-amino-acid chain: Large ribosomal subunit protein uL23 (100 aa).

It belongs to the universal ribosomal protein uL23 family. Part of the 50S ribosomal subunit. Contacts protein L29, and trigger factor when it is bound to the ribosome.

Functionally, one of the early assembly proteins it binds 23S rRNA. One of the proteins that surrounds the polypeptide exit tunnel on the outside of the ribosome. Forms the main docking site for trigger factor binding to the ribosome. The sequence is that of Large ribosomal subunit protein uL23 from Aeromonas salmonicida (strain A449).